Here is a 201-residue protein sequence, read N- to C-terminus: Recombination protein RecR (201 aa).

The C4-type zinc finger occupies 60–75; that stretch reads CKSCGNIDTRNPCTVC. The 96-residue stretch at 83–178 folds into the Toprim domain; sequence SIIVVVADVA…KVTRLAHGVP (96 aa).

Belongs to the RecR family.

In terms of biological role, may play a role in DNA repair. It seems to be involved in an RecBC-independent recombinational process of DNA repair. It may act with RecF and RecO. The polypeptide is Recombination protein RecR (Rhodopseudomonas palustris (strain BisB5)).